A 688-amino-acid polypeptide reads, in one-letter code: Protein SDA1 homolog (688 aa).

Phosphoserine is present on residues Ser-232, Ser-234, and Ser-236. The stretch at 254–318 (KKSSKNKKKL…ERFEVKMMLM (65 aa)) forms a coiled coil. Residues 484–498 (VENEEENAEGDEDGW) are compositionally biased toward acidic residues. Residues 484-524 (VENEEENAEGDEDGWESASLSDEADSDGEWVDVHHSSDEEQ) are disordered. Over residues 514–524 (VDVHHSSDEEQ) the composition is skewed to basic and acidic residues. Phosphoserine occurs at positions 586 and 596. The interval 605 to 688 (KKPKSDKETR…ALLKKRKRMK (84 aa)) is disordered. A compositionally biased stretch (basic and acidic residues) spans 668–681 (SFREKQLALRDALL).

It belongs to the SDA1 family.

It localises to the nucleus. Its subcellular location is the nucleolus. Functionally, required for 60S pre-ribosomal subunits export to the cytoplasm. The polypeptide is Protein SDA1 homolog (SDAD1) (Bos taurus (Bovine)).